The chain runs to 81 residues: Small ribosomal subunit protein bS20 (81 aa).

The segment covering 1–11 (MPNIKSQKKRV) has biased composition (basic residues). The disordered stretch occupies residues 1–20 (MPNIKSQKKRVLTNEKSRAS).

It belongs to the bacterial ribosomal protein bS20 family.

Binds directly to 16S ribosomal RNA. The polypeptide is Small ribosomal subunit protein bS20 (Mesoplasma florum (strain ATCC 33453 / NBRC 100688 / NCTC 11704 / L1) (Acholeplasma florum)).